We begin with the raw amino-acid sequence, 279 residues long: Protein FAM151B (279 aa).

The protein belongs to the menorin family.

In terms of biological role, essential for survival of retinal photoreceptor cells. The chain is Protein FAM151B (Fam151b) from Mus musculus (Mouse).